The sequence spans 807 residues: Glycerol-3-phosphate acyltransferase (807 aa).

The HXXXXD motif signature appears at 305-310 (CHRSHM).

This sequence belongs to the GPAT/DAPAT family.

It is found in the cell inner membrane. The enzyme catalyses sn-glycerol 3-phosphate + an acyl-CoA = a 1-acyl-sn-glycero-3-phosphate + CoA. It functions in the pathway phospholipid metabolism; CDP-diacylglycerol biosynthesis; CDP-diacylglycerol from sn-glycerol 3-phosphate: step 1/3. The protein is Glycerol-3-phosphate acyltransferase of Escherichia coli O139:H28 (strain E24377A / ETEC).